A 252-amino-acid polypeptide reads, in one-letter code: UPF0736 protein OB1207 (252 aa).

The protein belongs to the UPF0736 family.

In Oceanobacillus iheyensis (strain DSM 14371 / CIP 107618 / JCM 11309 / KCTC 3954 / HTE831), this protein is UPF0736 protein OB1207.